A 434-amino-acid chain; its full sequence is uncharacterized protein (434 aa).

The TRAM domain occupies 4 to 62 (LLTIHTQVEGEITALAFGGAGILRYHGFVIFVPFTAPGDQIICRIIEIKKSFAVAELVK). Positions 75, 81, 84, and 161 each coordinate [4Fe-4S] cluster. S-adenosyl-L-methionine contacts are provided by glutamine 266, tyrosine 295, glutamate 316, and asparagine 364. Catalysis depends on cysteine 391, which acts as the Nucleophile.

Belongs to the class I-like SAM-binding methyltransferase superfamily. RNA M5U methyltransferase family.

This is an uncharacterized protein from Protochlamydia amoebophila (strain UWE25).